Here is a 380-residue protein sequence, read N- to C-terminus: Erythronate-4-phosphate dehydrogenase (380 aa).

Residues Ser-45 and Thr-66 each coordinate substrate. Position 146 (Asp-146) interacts with NAD(+). Arg-207 is an active-site residue. Asp-232 serves as a coordination point for NAD(+). Residue Glu-237 is part of the active site. His-254 functions as the Proton donor in the catalytic mechanism. Position 257 (Gly-257) interacts with NAD(+). Residue Tyr-258 participates in substrate binding.

This sequence belongs to the D-isomer specific 2-hydroxyacid dehydrogenase family. PdxB subfamily. In terms of assembly, homodimer.

It localises to the cytoplasm. The catalysed reaction is 4-phospho-D-erythronate + NAD(+) = (R)-3-hydroxy-2-oxo-4-phosphooxybutanoate + NADH + H(+). It participates in cofactor biosynthesis; pyridoxine 5'-phosphate biosynthesis; pyridoxine 5'-phosphate from D-erythrose 4-phosphate: step 2/5. In terms of biological role, catalyzes the oxidation of erythronate-4-phosphate to 3-hydroxy-2-oxo-4-phosphonooxybutanoate. This chain is Erythronate-4-phosphate dehydrogenase, found in Marinomonas sp. (strain MWYL1).